The primary structure comprises 410 residues: LanC-like protein GCR2 (410 aa).

Zn(2+) contacts are provided by Cys-283, Cys-328, and His-329.

This sequence belongs to the LanC-like protein family. As to quaternary structure, may interact (via C-terminus) with GPA1.

Functionally, may play a role in abscisic acid (ABA) signaling. This Arabidopsis thaliana (Mouse-ear cress) protein is LanC-like protein GCR2 (GCR2).